Consider the following 586-residue polypeptide: Probable zinc metalloprotease EGY3, chloroplastic (586 aa).

A chloroplast-targeting transit peptide spans 1 to 54; the sequence is MSSSSLVTSLLFSSSSSSNTATSTSSRRSFSLFSKNQYCKPSPLRRSSSLLLVR. Over residues 62–73 the composition is skewed to basic and acidic residues; sequence EEKAAPAAESHH. The segment at 62–118 is disordered; it reads EEKAAPAAESHHAGGGQDDAATASHHAVEGENGVADADGGGVKKSKEELEEEEQQEV. Residues 103–195 are a coiled coil; that stretch reads VKKSKEELEE…NTFKALDLNK (93 aa). Helical transmembrane passes span 287-307, 318-338, 389-409, 427-447, 454-474, 506-526, and 550-570; these read LSAV…SGFF, VSDV…SEIA, ASAY…DGSL, PLLS…GNVL, VGVP…VTSL, VALG…WGLF, and YAWG…NGGG.

It belongs to the peptidase M50B family.

It is found in the plastid. It localises to the chloroplast membrane. In terms of biological role, probable membrane-associated metalloprotease that may be involved in chloroplast development. The protein is Probable zinc metalloprotease EGY3, chloroplastic (EGY3) of Oryza sativa subsp. indica (Rice).